Reading from the N-terminus, the 227-residue chain is NADH-quinone oxidoreductase subunit C (227 aa).

It belongs to the complex I 30 kDa subunit family. NDH-1 is composed of 14 different subunits. Subunits NuoB, C, D, E, F, and G constitute the peripheral sector of the complex.

It localises to the cell inner membrane. The enzyme catalyses a quinone + NADH + 5 H(+)(in) = a quinol + NAD(+) + 4 H(+)(out). NDH-1 shuttles electrons from NADH, via FMN and iron-sulfur (Fe-S) centers, to quinones in the respiratory chain. The immediate electron acceptor for the enzyme in this species is believed to be ubiquinone. Couples the redox reaction to proton translocation (for every two electrons transferred, four hydrogen ions are translocated across the cytoplasmic membrane), and thus conserves the redox energy in a proton gradient. This is NADH-quinone oxidoreductase subunit C from Legionella pneumophila (strain Paris).